Consider the following 188-residue polypeptide: Elongation factor P (188 aa).

The protein belongs to the elongation factor P family.

The protein localises to the cytoplasm. It participates in protein biosynthesis; polypeptide chain elongation. Its function is as follows. Involved in peptide bond synthesis. Stimulates efficient translation and peptide-bond synthesis on native or reconstituted 70S ribosomes in vitro. Probably functions indirectly by altering the affinity of the ribosome for aminoacyl-tRNA, thus increasing their reactivity as acceptors for peptidyl transferase. The protein is Elongation factor P of Rickettsia massiliae (strain Mtu5).